A 299-amino-acid polypeptide reads, in one-letter code: Virginiamycin B lyase (299 aa).

Substrate is bound at residue His229. Glu269 contributes to the Mg(2+) binding site. His271 (proton acceptor) is an active-site residue. Residue Glu286 participates in Mg(2+) binding.

The protein belongs to the Vgb family. In terms of assembly, monomer. Mg(2+) serves as cofactor.

Its function is as follows. Inactivates the type B streptogramin antibiotics by linearizing the lactone ring at the ester linkage, generating a free phenylglycine carboxylate and converting the threonyl moiety into 2-amino-butenoic acid. The chain is Virginiamycin B lyase from Bordetella parapertussis (strain 12822 / ATCC BAA-587 / NCTC 13253).